The following is an 86-amino-acid chain: Trypsin inhibitor (86 aa).

Disulfide bonds link C8–C65 and C49–C58.

Serine protease inhibitor which is active against trypsin. Displays strong antifungal activity against a number of phytopathogenic fungi including M.melonis, A.cucumerina, A.solani, C.glaeosporioides and P.capsici. The chain is Trypsin inhibitor from Fagopyrum tataricum (Tartarian buckwheat).